A 393-amino-acid polypeptide reads, in one-letter code: Phosphoglycerate kinase (393 aa).

Substrate is bound by residues 22–24, Arg37, 60–63, Arg119, and Arg152; these read DFN and HLGR. ATP is bound by residues Lys202, Gly293, Glu324, and 350–353; that span reads GGDS.

It belongs to the phosphoglycerate kinase family. Monomer.

It is found in the cytoplasm. It catalyses the reaction (2R)-3-phosphoglycerate + ATP = (2R)-3-phospho-glyceroyl phosphate + ADP. It participates in carbohydrate degradation; glycolysis; pyruvate from D-glyceraldehyde 3-phosphate: step 2/5. The protein is Phosphoglycerate kinase (pgk) of Borreliella burgdorferi (strain ATCC 35210 / DSM 4680 / CIP 102532 / B31) (Borrelia burgdorferi).